The following is an 826-amino-acid chain: DNA mismatch repair protein MutS (826 aa).

622-629 (GPNMAGKS) serves as a coordination point for ATP.

The protein belongs to the DNA mismatch repair MutS family.

In terms of biological role, this protein is involved in the repair of mismatches in DNA. It is possible that it carries out the mismatch recognition step. This protein has a weak ATPase activity. The protein is DNA mismatch repair protein MutS of Chlamydia abortus (strain DSM 27085 / S26/3) (Chlamydophila abortus).